The sequence spans 114 residues: Large ribosomal subunit protein P1 (114 aa).

The tract at residues 55 to 114 (EEAAAAPAAAPAASGSDDEAAADDGDDDEEADADEAAEAEDAGDDDDEEPSGEGLGDLFG) is disordered. Low complexity predominate over residues 56-69 (EAAAAPAAAPAASG). Positions 70 to 105 (SDDEAAADDGDDDEEADADEAAEAEDAGDDDDEEPS) are enriched in acidic residues.

The protein belongs to the eukaryotic ribosomal protein P1/P2 family. As to quaternary structure, part of the 50S ribosomal subunit. Homodimer, it forms part of the ribosomal stalk which helps the ribosome interact with GTP-bound translation factors. Forms a heptameric uL10/P0(P1)2(P1)2(P1)2 complex, where uL10/P0 forms an elongated spine to which the P1 dimers bind in a sequential fashion.

Its function is as follows. Forms part of the ribosomal stalk, playing a central role in the interaction of the ribosome with GTP-bound translation factors. This Halobacterium salinarum (strain ATCC 700922 / JCM 11081 / NRC-1) (Halobacterium halobium) protein is Large ribosomal subunit protein P1.